Consider the following 509-residue polypeptide: Dihydrolipoyl dehydrogenase, mitochondrial (509 aa).

The N-terminal 35 residues, 1–35, are a transit peptide targeting the mitochondrion; the sequence is MQSWSRVYRSLAKKGHFNRISHGLQGVSSVPLRTY. The residue at position 66 (Lys66) is an N6-acetyllysine; alternate. The residue at position 66 (Lys66) is an N6-succinyllysine; alternate. Residues 71-80 and Lys89 each bind FAD; that span reads EKNETLGGTC. Cysteines 80 and 85 form a disulfide. An N6-acetyllysine; alternate mark is found at Lys104, Lys122, Lys132, and Lys143. N6-succinyllysine; alternate occurs at positions 104, 122, 132, and 143. Gly154 provides a ligand contact to FAD. An N6-succinyllysine mark is found at Lys159 and Lys166. Residue 183–185 participates in FAD binding; sequence TGS. Residues 220–227 and Glu243 each bind NAD(+); that span reads GAGVIGVE. N6-succinyllysine occurs at positions 273 and 277. Val278 contributes to the NAD(+) binding site. Ser285 and Ser297 each carry phosphoserine. Gly314 provides a ligand contact to NAD(+). At Lys334 the chain carries N6-acetyllysine; alternate. Lys334 carries the N6-succinyllysine; alternate modification. The residue at position 346 (Lys346) is an N6-acetyllysine. FAD-binding positions include Asp355 and 361 to 364; that span reads MLAH. N6-acetyllysine; alternate is present on Lys410. Position 410 is an N6-succinyllysine; alternate (Lys410). N6-acetyllysine occurs at positions 417 and 420. Lys430 is subject to N6-succinyllysine. The Proton acceptor role is filled by His487. Residue Lys505 is modified to N6-acetyllysine; alternate. At Lys505 the chain carries N6-succinyllysine; alternate.

The protein belongs to the class-I pyridine nucleotide-disulfide oxidoreductase family. In terms of assembly, homodimer. Part of the multimeric pyruvate dehydrogenase complex that contains multiple copies of pyruvate dehydrogenase (subunits PDHA (PDHA1 or PDHA2) and PDHB, E1), dihydrolipoamide acetyltransferase (DLAT, E2) and lipoamide dehydrogenase (DLD, E3). These subunits are bound to an inner core composed of about 48 DLAT and 12 PDHX molecules (by non covalent bonds). The 2-oxoglutarate dehydrogenase complex is composed of OGDH (2-oxoglutarate dehydrogenase; E1), DLST (dihydrolipoamide succinyltransferase; E2), DLD (dihydrolipoamide dehydrogenase; E3) and the assembly factor KGD4. It contains multiple copies of the three enzymatic components (E1, E2 and E3). In the nucleus, the 2-oxoglutarate dehydrogenase complex associates with KAT2A. Interacts with PDHX. It depends on FAD as a cofactor. Tyrosine phosphorylated. Expressed in liver (at protein level).

The protein localises to the mitochondrion matrix. Its subcellular location is the nucleus. It localises to the cell projection. The protein resides in the cilium. It is found in the flagellum. The protein localises to the cytoplasmic vesicle. Its subcellular location is the secretory vesicle. It localises to the acrosome. The catalysed reaction is N(6)-[(R)-dihydrolipoyl]-L-lysyl-[protein] + NAD(+) = N(6)-[(R)-lipoyl]-L-lysyl-[protein] + NADH + H(+). Functionally, lipoamide dehydrogenase is a component of the glycine cleavage system as well as an E3 component of three alpha-ketoacid dehydrogenase complexes (pyruvate-, alpha-ketoglutarate-, and branched-chain amino acid-dehydrogenase complex). The 2-oxoglutarate dehydrogenase complex is mainly active in the mitochondrion. A fraction of the 2-oxoglutarate dehydrogenase complex also localizes in the nucleus and is required for lysine succinylation of histones: associates with KAT2A on chromatin and provides succinyl-CoA to histone succinyltransferase KAT2A. In monomeric form may have additional moonlighting function as serine protease. Involved in the hyperactivation of spermatazoa during capacitation and in the spermatazoal acrosome reaction. This Mus musculus (Mouse) protein is Dihydrolipoyl dehydrogenase, mitochondrial (Dld).